The chain runs to 710 residues: Probable thimet oligopeptidase (710 aa).

His502 contacts Zn(2+). Glu503 is a catalytic residue. His506 lines the Zn(2+) pocket.

Belongs to the peptidase M3 family. The cofactor is Zn(2+).

It is found in the cytoplasm. The enzyme catalyses Preferential cleavage of bonds with hydrophobic residues at P1, P2 and P3' and a small residue at P1' in substrates of 5 to 15 residues.. Its function is as follows. Involved in cytoplasmic peptide degradation. This chain is Probable thimet oligopeptidase, found in Arabidopsis thaliana (Mouse-ear cress).